A 405-amino-acid chain; its full sequence is MIQWFLKYRPRSLKDVENQDGAKKELQEWIESWLNGKPNAKAVLLHGPPGVGKTTLAEALAHDYNLELLEMNASDSRKLQDIKSVAEKASVYGSIFGTRGKLILLDEVDGINVREDTGAIQGILELIEKTKYPLIMTANDPWNPALRELRNKTKMVGLNKLGKYPLRRLLKKICQAEKIICDDEALNYIIDTSEGDARYAINMLQGIGEGYGKVTLDLVEAMARRKERELDPFETLRDIFWARYAWQAKNAATSAQIDYDMLIRWISENIPIQYDNIEDVWRAFDALSRASIFLKRAKGGDWDLLSYAYDLMSSGVAAAEIEKKKPNWKPKWKKYQFPSYIQLLSKSKDIRDTRDEIIKKLAIHSSFNKTLNDTYPFFLIFYKKYDKRLSLNTKEKEYLNSASKS.

47-54 is a binding site for ATP; sequence GPPGVGKT.

Belongs to the activator 1 small subunits family. RfcL subfamily. Heteromultimer composed of small subunits (RfcS) and large subunits (RfcL).

Functionally, part of the RFC clamp loader complex which loads the PCNA sliding clamp onto DNA. The polypeptide is Replication factor C large subunit (Saccharolobus islandicus (strain M.16.27) (Sulfolobus islandicus)).